A 477-amino-acid chain; its full sequence is Sensor protein kinase PmrB (477 aa).

The next 2 membrane-spanning stretches (helical) occupy residues 13–33 (LLVN…ALTY) and 161–181 (LLLF…GGLV). In terms of domain architecture, HAMP spans 186–238 (ARGLAPLREVQAEVQQRSARHLQPIAVEAVPLEIRGLIDELNLLLERLRTALE). A Histidine kinase domain is found at 246 to 459 (DAAHEIRTPL…EVQVFLPKTQ (214 aa)). Position 249 is a phosphohistidine; by autocatalysis (histidine 249). Residues 455-477 (LPKTQPDATRPPARGPDSGRSHI) form a disordered region.

The protein localises to the membrane. The enzyme catalyses ATP + protein L-histidine = ADP + protein N-phospho-L-histidine.. In terms of biological role, member of the two-component regulatory system PmrA/PmrB that plays a role in the regulation of resistance towards polymyxin B and cationic antimicrobial peptides in response to limiting concentrations of Mg(2+). Also autoregulates its own pmrAB operon under Mg(2+)-limiting conditions. May function as a membrane-associated protein kinase that phosphorylates PmrA in response to environmental signals leading to activation of specific gene promoters. The protein is Sensor protein kinase PmrB (pmrB) of Pseudomonas aeruginosa (strain ATCC 15692 / DSM 22644 / CIP 104116 / JCM 14847 / LMG 12228 / 1C / PRS 101 / PAO1).